Reading from the N-terminus, the 307-residue chain is Fructokinase (307 aa).

This sequence belongs to the carbohydrate kinase PfkB family.

It catalyses the reaction D-fructose + ATP = D-fructose 6-phosphate + ADP + H(+). The sequence is that of Fructokinase (cscK) from Escherichia coli.